The chain runs to 541 residues: Membrane protein insertase YidC (541 aa).

The chain crosses the membrane as a helical span at residues S6 to D26. Residues E34–I56 are disordered. 4 helical membrane-spanning segments follow: residues F337–V357, L416–F436, L454–L474, and P495–V515.

Belongs to the OXA1/ALB3/YidC family. Type 1 subfamily. In terms of assembly, interacts with the Sec translocase complex via SecD. Specifically interacts with transmembrane segments of nascent integral membrane proteins during membrane integration.

The protein resides in the cell inner membrane. Its function is as follows. Required for the insertion and/or proper folding and/or complex formation of integral membrane proteins into the membrane. Involved in integration of membrane proteins that insert both dependently and independently of the Sec translocase complex, as well as at least some lipoproteins. Aids folding of multispanning membrane proteins. This is Membrane protein insertase YidC from Haemophilus influenzae (strain ATCC 51907 / DSM 11121 / KW20 / Rd).